The sequence spans 137 residues: ATP synthase epsilon chain (137 aa).

The protein belongs to the ATPase epsilon chain family. F-type ATPases have 2 components, CF(1) - the catalytic core - and CF(0) - the membrane proton channel. CF(1) has five subunits: alpha(3), beta(3), gamma(1), delta(1), epsilon(1). CF(0) has three main subunits: a, b and c.

The protein resides in the cellular thylakoid membrane. Its function is as follows. Produces ATP from ADP in the presence of a proton gradient across the membrane. The sequence is that of ATP synthase epsilon chain (atpC) from Nostoc sp. (strain PCC 7120 / SAG 25.82 / UTEX 2576).